The primary structure comprises 583 residues: 2-succinyl-5-enolpyruvyl-6-hydroxy-3-cyclohexene-1-carboxylate synthase (583 aa).

It belongs to the TPP enzyme family. MenD subfamily. Homodimer. It depends on Mg(2+) as a cofactor. The cofactor is Mn(2+). Thiamine diphosphate serves as cofactor.

The catalysed reaction is isochorismate + 2-oxoglutarate + H(+) = 5-enolpyruvoyl-6-hydroxy-2-succinyl-cyclohex-3-ene-1-carboxylate + CO2. Its pathway is quinol/quinone metabolism; 1,4-dihydroxy-2-naphthoate biosynthesis; 1,4-dihydroxy-2-naphthoate from chorismate: step 2/7. It functions in the pathway quinol/quinone metabolism; menaquinone biosynthesis. Catalyzes the thiamine diphosphate-dependent decarboxylation of 2-oxoglutarate and the subsequent addition of the resulting succinic semialdehyde-thiamine pyrophosphate anion to isochorismate to yield 2-succinyl-5-enolpyruvyl-6-hydroxy-3-cyclohexene-1-carboxylate (SEPHCHC). In Chlorobium luteolum (strain DSM 273 / BCRC 81028 / 2530) (Pelodictyon luteolum), this protein is 2-succinyl-5-enolpyruvyl-6-hydroxy-3-cyclohexene-1-carboxylate synthase.